A 63-amino-acid chain; its full sequence is Small integral membrane protein 43 (63 aa).

Important for interaction with SLC2A1 and SLC2A3 regions lie at residues 7–29 (LLLY…FVVI) and 51–57 (HREPWGF). Residues 9 to 29 (LYLALFFFLLFLLFLLLFVVI) traverse the membrane as a helical segment.

In terms of assembly, interacts with glucose transporters SLC2A1/GLUT1 and SLC2A3/GLUT3; the interactions may promote SLC2A1- and SLC2A3-mediated glucose transport to meet the energy needs of mesendoderm differentiation.

It localises to the cell membrane. Functionally, required for mesendoderm differentiation. Interacts with glucose transporters and promotes glucose uptake. Probably augments the glucose uptake capacity of glucose transporter proteins to meet the energy needs of mesendoderm differentiation. The chain is Small integral membrane protein 43 from Homo sapiens (Human).